The following is a 364-amino-acid chain: 3-methyl-2-oxobutanoate hydroxymethyltransferase 1, mitochondrial (364 aa).

The N-terminal 59 residues, 1 to 59, are a transit peptide targeting the mitochondrion; the sequence is MMMMMRRAFRHLARQQRRPLSHVPESAVYGGPRPQDVGAAAGAGAGAGATRRVTVTTLR. Mg(2+) contacts are provided by Asp94 and Asp133. 3-methyl-2-oxobutanoate-binding positions include 94–95, Asp133, and Lys163; that span reads DS. Mg(2+) is bound at residue Glu165. Catalysis depends on Glu233, which acts as the Proton acceptor.

It belongs to the PanB family. It depends on Mg(2+) as a cofactor.

The protein localises to the mitochondrion. The catalysed reaction is 3-methyl-2-oxobutanoate + (6R)-5,10-methylene-5,6,7,8-tetrahydrofolate + H2O = 2-dehydropantoate + (6S)-5,6,7,8-tetrahydrofolate. Its pathway is cofactor biosynthesis; (R)-pantothenate biosynthesis; (R)-pantoate from 3-methyl-2-oxobutanoate: step 1/2. Catalyzes the reversible reaction in which hydroxymethyl group from 5,10-methylenetetrahydrofolate is transferred onto alpha-ketoisovalerate to form ketopantoate. This chain is 3-methyl-2-oxobutanoate hydroxymethyltransferase 1, mitochondrial (KPHMT1), found in Oryza sativa subsp. japonica (Rice).